Reading from the N-terminus, the 185-residue chain is CASP-like protein 5A1 (185 aa).

Over 1–45 the chain is Cytoplasmic; sequence MNVSHPAVHPVGVPPALGGHAVPPRMRMRVRMEYLVFQGMPLPGT. The chain crosses the membrane as a helical span at residues 46-66; that stretch reads LGGLVLRLGQFCSALIAFSVM. Topologically, residues 67-76 are extracellular; that stretch reads LSVRDFSVTA. The chain crosses the membrane as a helical span at residues 77-97; sequence FCYLVAATVLQCLWSLAMAVI. Topologically, residues 98–121 are cytoplasmic; the sequence is DVYALLVKRSLRNPLLVSIFVVGD. Residues 122-142 form a helical membrane-spanning segment; that stretch reads GVTATLTFAAACASAGVIVLI. The Extracellular portion of the chain corresponds to 143-160; it reads GNDIAMCKDNPCANYEAA. The helical transmembrane segment at 161 to 181 threads the bilayer; that stretch reads IIMAFLSWFMVSISFILTFWL. Residues 182-185 are Cytoplasmic-facing; the sequence is LATL.

It belongs to the Casparian strip membrane proteins (CASP) family. In terms of assembly, homodimer and heterodimers.

It localises to the cell membrane. The sequence is that of CASP-like protein 5A1 from Picea sitchensis (Sitka spruce).